We begin with the raw amino-acid sequence, 68 residues long: Large ribosomal subunit protein uL29 (68 aa).

This sequence belongs to the universal ribosomal protein uL29 family.

In Thermoplasma acidophilum (strain ATCC 25905 / DSM 1728 / JCM 9062 / NBRC 15155 / AMRC-C165), this protein is Large ribosomal subunit protein uL29 (rpl29).